The following is a 127-amino-acid chain: Protein chibby homolog 1 (127 aa).

Polar residues predominate over residues 1–10 (MPLFGSTFSP). A disordered region spans residues 1 to 26 (MPLFGSTFSPKKTPPRKSASLSNLHN). 2 positions are modified to phosphoserine: S9 and S20. The minimal region for the interaction with PKD2 stretch occupies residues 60–112 (IAETGISGGVDRREAQRLRRRNQQLEEENNLLRLKVDILLDMLSETTAESHLM). Residues 68–125 (GVDRREAQRLRRRNQQLEEENNLLRLKVDILLDMLSETTAESHLMEKELDELKSVSRR) adopt a coiled-coil conformation. The leucine-zipper; mediates homodimerization stretch occupies residues 77–98 (LRRRNQQLEEENNLLRLKVDIL).

The protein belongs to the chibby family. As to quaternary structure, homodimer. Homodimerization is essential for nuclear localization and interaction with KPNA4 but is dispensable for interaction with CTNNB1. Interacts with polycystin-2/PKD2 and GM130. Interacts with the C-terminal region of CTNNB1. Interacts (C-terminus) with TCIM (C-terminus), TCIM competes with CTNNB1 for the interaction with CBY1. Interacts with FAM92A; this interaction facilitates targeting of FAM92A to cilium basal body. Interacts with CIBAR2. Interacts with KPNA4.

The protein resides in the nucleus speckle. It is found in the cytoplasm. Its subcellular location is the cytoskeleton. It localises to the cilium basal body. The protein localises to the microtubule organizing center. The protein resides in the centrosome. It is found in the centriole. Its subcellular location is the golgi apparatus. It localises to the trans-Golgi network. The protein localises to the cell projection. The protein resides in the cilium. It is found in the flagellum. Its subcellular location is the nucleus. In terms of biological role, inhibits the Wnt/Wingless pathway by binding to CTNNB1/beta-catenin and inhibiting beta-catenin-mediated transcriptional activation through competition with TCF/LEF transcription factors. Has also been shown to play a role in regulating the intracellular trafficking of polycystin-2/PKD2 and possibly of other intracellular proteins. Promotes adipocyte and cardiomyocyte differentiation. This is Protein chibby homolog 1 (CBY1) from Bos taurus (Bovine).